The sequence spans 590 residues: Potassium-transporting ATPase potassium-binding subunit (590 aa).

A run of 4 helical transmembrane segments spans residues 3 to 23, 63 to 83, 134 to 154, and 177 to 197; these read AFLLQLAIYLAVLLVLARPLG, HYALAVIAVNVLGALAVYALQ, GLAVQNFLSAATGIAVVIALI, and LYVLLPLSVIVAVFFVSQGAI. The segment at 217–244 is disordered; that stretch reads PKTDAQGNPIKDAQGNPVTEKATTQKQT. Helical transmembrane passes span 284 to 304, 312 to 332, 359 to 379, 388 to 408, 411 to 431, 450 to 470, 515 to 535, and 558 to 578; these read FVQMLSIFLIPAALCFTFGAM, WAVLASMTILFVVLAVFEMWA, FGVVASSLFVTITTAASCGAV, ALGGFVPMFLIQLGEVVFGGV, GLYGMLVYAILAVFIAGLMIG, SIAILVTPLLVLVGTAVAVLA, VALGIVMWLGRFWIIVPVLAM, and LFVVLLIGSVLLVGALTYIPA.

This sequence belongs to the KdpA family. As to quaternary structure, the system is composed of three essential subunits: KdpA, KdpB and KdpC.

Its subcellular location is the cell inner membrane. Its function is as follows. Part of the high-affinity ATP-driven potassium transport (or Kdp) system, which catalyzes the hydrolysis of ATP coupled with the electrogenic transport of potassium into the cytoplasm. This subunit binds the periplasmic potassium ions and delivers the ions to the membrane domain of KdpB through an intramembrane tunnel. The sequence is that of Potassium-transporting ATPase potassium-binding subunit from Ralstonia nicotianae (strain ATCC BAA-1114 / GMI1000) (Ralstonia solanacearum).